The chain runs to 272 residues: Ribosomal RNA small subunit methyltransferase A (272 aa).

Residues Asn-18, Leu-20, Gly-45, Glu-66, Asp-91, and Asn-113 each coordinate S-adenosyl-L-methionine.

This sequence belongs to the class I-like SAM-binding methyltransferase superfamily. rRNA adenine N(6)-methyltransferase family. RsmA subfamily.

It is found in the cytoplasm. The enzyme catalyses adenosine(1518)/adenosine(1519) in 16S rRNA + 4 S-adenosyl-L-methionine = N(6)-dimethyladenosine(1518)/N(6)-dimethyladenosine(1519) in 16S rRNA + 4 S-adenosyl-L-homocysteine + 4 H(+). Specifically dimethylates two adjacent adenosines (A1518 and A1519) in the loop of a conserved hairpin near the 3'-end of 16S rRNA in the 30S particle. May play a critical role in biogenesis of 30S subunits. The sequence is that of Ribosomal RNA small subunit methyltransferase A from Proteus mirabilis (strain HI4320).